The following is a 209-amino-acid chain: MVKSPLKALVISLVFLFVLGFLFPTVTSLITEKALPNQSEGQPIKIDGKVYGSYLLAEAFNSSIFFHPRPSAIGYNLSESGSYPYSLGNPEVLNLTEKYLDEFLKDNPGINASQIPYAMLSYSASGLDPNIPLQGALIQIPRISIALHSITNNSVSLWENYLNDLVNKYTTQNFPFFGSYYVNIMYLNVNILEYLMNNGYIKSLNSIPP.

Residues 10–30 form a helical membrane-spanning segment; it reads VISLVFLFVLGFLFPTVTSLI.

It belongs to the KdpC family. In terms of assembly, the system is composed of three essential subunits: KdpA, KdpB and KdpC.

It localises to the cell membrane. In terms of biological role, part of the high-affinity ATP-driven potassium transport (or Kdp) system, which catalyzes the hydrolysis of ATP coupled with the electrogenic transport of potassium into the cytoplasm. This subunit acts as a catalytic chaperone that increases the ATP-binding affinity of the ATP-hydrolyzing subunit KdpB by the formation of a transient KdpB/KdpC/ATP ternary complex. The chain is Potassium-transporting ATPase KdpC subunit from Thermoplasma volcanium (strain ATCC 51530 / DSM 4299 / JCM 9571 / NBRC 15438 / GSS1).